The primary structure comprises 505 residues: Probable alpha-L-arabinofuranosidase C (505 aa).

3 N-linked (GlcNAc...) asparagine glycosylation sites follow: N152, N269, and N438.

The protein belongs to the glycosyl hydrolase 51 family.

It is found in the secreted. It catalyses the reaction Hydrolysis of terminal non-reducing alpha-L-arabinofuranoside residues in alpha-L-arabinosides.. Its pathway is glycan metabolism; L-arabinan degradation. Its function is as follows. Alpha-L-arabinofuranosidase involved in the degradation of arabinoxylan, a major component of plant hemicellulose. Acts only on small linear 1,5-alpha-linked L-arabinofuranosyl oligosaccharides. The sequence is that of Probable alpha-L-arabinofuranosidase C (abfC) from Aspergillus clavatus (strain ATCC 1007 / CBS 513.65 / DSM 816 / NCTC 3887 / NRRL 1 / QM 1276 / 107).